Here is a 183-residue protein sequence, read N- to C-terminus: MLFAWAPFPALLGLADSCCFVVPRSEWKALPSECSKGLKKPVRYVVISHTAGSFCSSPDSCEQQARNVQLYQMKQLGWCDVAYNFLIGEDGHVYEGRGWTIKGDHTGPIWNPMSIGITFMGDYSHRVPAKRALRAALNLLKCGVSEGFLRSNYEVKGHRDVQSTLSPGDQLYEIIQSWDHYRE.

The first 17 residues, 1-17, serve as a signal peptide directing secretion; that stretch reads MLFAWAPFPALLGLADS. 3 cysteine pairs are disulfide-bonded: Cys-18–Cys-142, Cys-34–Cys-79, and Cys-55–Cys-61. An N-acetylmuramoyl-L-alanine amidase domain is found at 40–168; that stretch reads KPVRYVVISH…RDVQSTLSPG (129 aa).

This sequence belongs to the N-acetylmuramoyl-L-alanine amidase 2 family. As to expression, expressed in all regions of the brain.

It is found in the secreted. The protein resides in the cytoplasmic granule. In terms of biological role, innate immunity protein that plays several important functions in antimicrobial and antitumor defense systems. Acts as a pattern receptor that binds to murein peptidoglycans (PGN) of Gram-positive bacteria and thus provides bactericidal activity. Forms an equimolar complex with heat shock protein HSPA1A and induces programmed cell death through apoptosis and necroptosis in tumor cell lines by activating the TNFR1 receptor on the target cell membrane. In addition, acts in complex with the Ca(2+)-binding protein S100A4 as a chemoattractant able to induce lymphocyte movement. Mechanistically, this complex acts as a ligand of the chemotactic receptors CCR5 and CXCR3 which are present on the cells of the immune system. Promotes also the activation of lymphocytes that become able to kill virus-infected cells as well as tumor cells by modulating the spectrum of their target-cell specificity. Induction of cytotoxicity on monocyte surface requires interaction with TREM1 receptor. In Rattus norvegicus (Rat), this protein is Peptidoglycan recognition protein 1 (Pglyrp1).